The primary structure comprises 461 residues: CBL-interacting protein kinase 1 (461 aa).

The Protein kinase domain occupies 19 to 274 (YEIGRTLGEG…IAGIKEHEWF (256 aa)). ATP is bound by residues 25–33 (LGEGNFGKV) and Lys48. The active-site Proton acceptor is Asp142. An activation loop region spans residues 160 to 189 (DFGLSALPQHLGNDGLLHTTCGSPNYIAPE). An NAF domain is found at 308-332 (EKPTHINAFQLIGMASALDLSGFFE). The PPI stretch occupies residues 338–367 (QRKIRFTSTHSPKDLFDKIENVVTEMGFQV).

This sequence belongs to the protein kinase superfamily. CAMK Ser/Thr protein kinase family. SNF1 subfamily. The cofactor is Mn(2+).

The catalysed reaction is L-seryl-[protein] + ATP = O-phospho-L-seryl-[protein] + ADP + H(+). It carries out the reaction L-threonyl-[protein] + ATP = O-phospho-L-threonyl-[protein] + ADP + H(+). In terms of biological role, CIPK serine-threonine protein kinases interact with CBL proteins. Binding of a CBL protein to the regulatory NAF domain of CIPK protein lead to the activation of the kinase in a calcium-dependent manner. This chain is CBL-interacting protein kinase 1 (CIPK1), found in Oryza sativa subsp. japonica (Rice).